We begin with the raw amino-acid sequence, 130 residues long: Putative transposase for insertion sequence element IS6501 (130 aa).

This sequence belongs to the transposase 11 family.

In terms of biological role, involved in the transposition of the insertion sequence. The polypeptide is Putative transposase for insertion sequence element IS6501 (Brucella ovis (strain ATCC 25840 / 63/290 / NCTC 10512)).